Consider the following 33-residue polypeptide: Rugosin-A (33 aa).

Residues C27 and C33 are joined by a disulfide bond.

Belongs to the frog skin active peptide (FSAP) family. Brevinin subfamily. In terms of tissue distribution, expressed by the skin glands.

Its subcellular location is the secreted. Its function is as follows. Has antibacterial activity against Gram-positive bacteria. This Glandirana rugosa (Japanese wrinkled frog) protein is Rugosin-A.